Here is a 433-residue protein sequence, read N- to C-terminus: Serine hydroxymethyltransferase (433 aa).

(6S)-5,6,7,8-tetrahydrofolate-binding positions include Leu132 and Gly136–Leu138. Lys241 is subject to N6-(pyridoxal phosphate)lysine.

It belongs to the SHMT family. In terms of assembly, homodimer. The cofactor is pyridoxal 5'-phosphate.

It is found in the cytoplasm. The enzyme catalyses (6R)-5,10-methylene-5,6,7,8-tetrahydrofolate + glycine + H2O = (6S)-5,6,7,8-tetrahydrofolate + L-serine. It participates in one-carbon metabolism; tetrahydrofolate interconversion. It functions in the pathway amino-acid biosynthesis; glycine biosynthesis; glycine from L-serine: step 1/1. Its function is as follows. Catalyzes the reversible interconversion of serine and glycine with tetrahydrofolate (THF) serving as the one-carbon carrier. This reaction serves as the major source of one-carbon groups required for the biosynthesis of purines, thymidylate, methionine, and other important biomolecules. Also exhibits THF-independent aldolase activity toward beta-hydroxyamino acids, producing glycine and aldehydes, via a retro-aldol mechanism. This Rhodopseudomonas palustris (strain BisA53) protein is Serine hydroxymethyltransferase.